Here is a 660-residue protein sequence, read N- to C-terminus: MADPSSYRPAPGTIPESPGVYRFRDGTGRVIYVGKARNLRSRLNSYFADPVNLHQRTRQMVFTAESVDWISVATEVEALQQEFTEIKQYDPRFNVRYRDDKSYPYLAVTVDEEFPRLQVMRGAKRRGVRYFGPYSHAWAIRETLDLLLRVFPARTCSSGVFKRAGQVGRPCLLGYIGKCSAPCVGSVSAEEHRDIVNGFCDFMAGRTDAMVRRLEREMAEASAELEFERAARLRDDLAALRRAMEKQTVVFGDGTDADVVAFADDPLEAAVQVFHVRDGRIRGQRGWVVEKTEDLTAGDLVHHFCTQVYGGEHGEAHVPRELLVPELPADVEALADWLSEHRGSRVTLRVPQRGDKRALLETVARNATDALARHKLKRAGDLTTRSKALDEIADTLGMRTAPLRIECFDISQIQGTDVVASMVVFEDGLPRKSEYRRFIIRGATDDLSAMSEVLRRRFARYLDARAETGEAGVESAGDPDAPAGPDAPDEPRVGTLVDPTTGRPRKFAYPPQLVVVDGGAPQVAAAAQALAELGVDDVALCGLAKRLEEVWLPDDDFPAILPRTSEGLYLLQRVRDEAHRFAITFHRQRRSRRMTESALDRVSGLGEVRRKALLRHFGSLKRLAAASVEEITEVPGIGKRTAEAILAALADPTGQSEPRR.

Residues 16–95 (ESPGVYRFRD…IKQYDPRFNV (80 aa)) form the GIY-YIG domain. Residues 208-243 (DAMVRRLEREMAEASAELEFERAARLRDDLAALRRA) enclose the UVR domain. Positions 469–501 (GEAGVESAGDPDAPAGPDAPDEPRVGTLVDPTT) are disordered. A compositionally biased stretch (low complexity) spans 476-486 (AGDPDAPAGPD).

The protein belongs to the UvrC family. As to quaternary structure, interacts with UvrB in an incision complex.

It localises to the cytoplasm. Functionally, the UvrABC repair system catalyzes the recognition and processing of DNA lesions. UvrC both incises the 5' and 3' sides of the lesion. The N-terminal half is responsible for the 3' incision and the C-terminal half is responsible for the 5' incision. This chain is UvrABC system protein C, found in Salinispora arenicola (strain CNS-205).